Here is a 280-residue protein sequence, read N- to C-terminus: Energy-coupling factor transporter ATP-binding protein EcfA1 (280 aa).

The 236-residue stretch at 6–241 folds into the ABC transporter domain; the sequence is IELKNVTFRY…GDELLDLGLD (236 aa). 41-48 contacts ATP; the sequence is GHNGSGKS.

It belongs to the ABC transporter superfamily. Energy-coupling factor EcfA family. In terms of assembly, forms a stable energy-coupling factor (ECF) transporter complex composed of 2 membrane-embedded substrate-binding proteins (S component), 2 ATP-binding proteins (A component) and 2 transmembrane proteins (T component).

The protein localises to the cell membrane. Functionally, ATP-binding (A) component of a common energy-coupling factor (ECF) ABC-transporter complex. Unlike classic ABC transporters this ECF transporter provides the energy necessary to transport a number of different substrates. The sequence is that of Energy-coupling factor transporter ATP-binding protein EcfA1 from Streptococcus mutans serotype c (strain ATCC 700610 / UA159).